A 634-amino-acid polypeptide reads, in one-letter code: Chaperone protein HtpG (634 aa).

Positions 1–344 are a; substrate-binding; that stretch reads MNETVANNKE…SNDLPLNVSR (344 aa). Residues 345–561 are b; the sequence is EILQDNKVTQ…DFEMGTQMAK (217 aa). Residues 562-634 form a c region; sequence LLAAAGQAVP…TAINSLLTKG (73 aa).

Belongs to the heat shock protein 90 family. Homodimer.

The protein resides in the cytoplasm. In terms of biological role, molecular chaperone. Has ATPase activity. The chain is Chaperone protein HtpG from Vibrio vulnificus (strain YJ016).